Here is a 718-residue protein sequence, read N- to C-terminus: GMP synthase [glutamine-hydrolyzing] (718 aa).

The 205-residue stretch at 43–247 folds into the Glutamine amidotransferase type-1 domain; sequence VIVILDAGSQ…LIDICGCSAN (205 aa). Active-site for GATase activity residues include Cys128, His221, and Glu223. The 210-residue stretch at 248–457 folds into the GMPS ATP-PPase domain; that stretch reads YTLDDREQQA…LGLSDSLVWR (210 aa). 275-281 contributes to the ATP binding site; it reads SGGVDST.

In terms of assembly, homodimer.

It carries out the reaction XMP + L-glutamine + ATP + H2O = GMP + L-glutamate + AMP + diphosphate + 2 H(+). Its pathway is purine metabolism; GMP biosynthesis; GMP from XMP (L-Gln route): step 1/1. The protein is GMP synthase [glutamine-hydrolyzing] (guaA) of Dictyostelium discoideum (Social amoeba).